Here is a 167-residue protein sequence, read N- to C-terminus: Small ribosomal subunit protein uS5 (167 aa).

The S5 DRBM domain occupies 12 to 75; the sequence is IEDRVVAINR…ETARKSLIEV (64 aa).

The protein belongs to the universal ribosomal protein uS5 family. As to quaternary structure, part of the 30S ribosomal subunit. Contacts proteins S4 and S8.

With S4 and S12 plays an important role in translational accuracy. In terms of biological role, located at the back of the 30S subunit body where it stabilizes the conformation of the head with respect to the body. The chain is Small ribosomal subunit protein uS5 from Pediococcus pentosaceus (strain ATCC 25745 / CCUG 21536 / LMG 10740 / 183-1w).